Reading from the N-terminus, the 176-residue chain is Translation initiation factor IF-3 (176 aa).

This sequence belongs to the IF-3 family. As to quaternary structure, monomer.

Its subcellular location is the cytoplasm. IF-3 binds to the 30S ribosomal subunit and shifts the equilibrium between 70S ribosomes and their 50S and 30S subunits in favor of the free subunits, thus enhancing the availability of 30S subunits on which protein synthesis initiation begins. The polypeptide is Translation initiation factor IF-3 (Streptococcus mutans serotype c (strain ATCC 700610 / UA159)).